A 410-amino-acid polypeptide reads, in one-letter code: Peptidase T (410 aa).

Residue H79 coordinates Zn(2+). D81 is a catalytic residue. A Zn(2+)-binding site is contributed by D142. The Proton acceptor role is filled by E176. Residues E177, D199, and H381 each coordinate Zn(2+).

It belongs to the peptidase M20B family. Requires Zn(2+) as cofactor.

It is found in the cytoplasm. The catalysed reaction is Release of the N-terminal residue from a tripeptide.. In terms of biological role, cleaves the N-terminal amino acid of tripeptides. This is Peptidase T from Bacillus thuringiensis subsp. konkukian (strain 97-27).